The chain runs to 521 residues: Maturase K (521 aa).

It belongs to the intron maturase 2 family. MatK subfamily.

It localises to the plastid. It is found in the chloroplast. Functionally, usually encoded in the trnK tRNA gene intron. Probably assists in splicing its own and other chloroplast group II introns. The sequence is that of Maturase K from Kniphofia uvaria (Red-hot poker).